A 382-amino-acid polypeptide reads, in one-letter code: Na(+)/H(+) antiporter NhaA 2 (382 aa).

11 consecutive transmembrane segments (helical) span residues 8-28, 49-69, 87-107, 115-135, 146-166, 169-189, 209-229, 252-272, 286-306, 325-345, and 353-373; these read FFSS…AAII, LSVE…MVGL, ALPG…YVWF, LAGW…VLAL, IFLS…IALF, SNIS…LFIM, FFML…ALFI, WVTF…ALSG, VALG…LLAV, VSVL…LAFA, and EVKV…MLIL.

It belongs to the NhaA Na(+)/H(+) (TC 2.A.33) antiporter family.

The protein localises to the cell inner membrane. The catalysed reaction is Na(+)(in) + 2 H(+)(out) = Na(+)(out) + 2 H(+)(in). Na(+)/H(+) antiporter that extrudes sodium in exchange for external protons. The chain is Na(+)/H(+) antiporter NhaA 2 from Klebsiella pneumoniae subsp. pneumoniae (strain ATCC 700721 / MGH 78578).